Consider the following 660-residue polypeptide: tRNA 5-methylaminomethyl-2-thiouridine biosynthesis bifunctional protein MnmC (660 aa).

The segment at 1–242 is tRNA (mnm(5)s(2)U34)-methyltransferase; it reads MTDRIVPATL…KRAMLVGEFA (242 aa). The FAD-dependent cmnm(5)s(2)U34 oxidoreductase stretch occupies residues 266-660; the sequence is IGAGLAGCAV…VRALRHGRVA (395 aa).

The protein in the N-terminal section; belongs to the methyltransferase superfamily. tRNA (mnm(5)s(2)U34)-methyltransferase family. It in the C-terminal section; belongs to the DAO family. FAD is required as a cofactor.

It is found in the cytoplasm. The catalysed reaction is 5-aminomethyl-2-thiouridine(34) in tRNA + S-adenosyl-L-methionine = 5-methylaminomethyl-2-thiouridine(34) in tRNA + S-adenosyl-L-homocysteine + H(+). Functionally, catalyzes the last two steps in the biosynthesis of 5-methylaminomethyl-2-thiouridine (mnm(5)s(2)U) at the wobble position (U34) in tRNA. Catalyzes the FAD-dependent demodification of cmnm(5)s(2)U34 to nm(5)s(2)U34, followed by the transfer of a methyl group from S-adenosyl-L-methionine to nm(5)s(2)U34, to form mnm(5)s(2)U34. The chain is tRNA 5-methylaminomethyl-2-thiouridine biosynthesis bifunctional protein MnmC from Burkholderia mallei (strain NCTC 10247).